The sequence spans 506 residues: Alpha-ketoglutarate-dependent dioxygenase FTO (506 aa).

Thr4 bears the Phosphothreonine mark. Residues 32–326 form a fe2OG dioxygenase domain region; sequence TPKDDEFYQQ…SSTHRVAECS (295 aa). Substrate is bound by residues Arg96 and Tyr108. Asn204 is a 2-oxoglutarate binding site. The tract at residues 212–223 is loop L1; predicted to block binding of double-stranded DNA or RNA; that stretch reads PYLKEEPYFGMG. The residue at position 215 (Lys215) is an N6-acetyllysine. Residues His230 and Asp232 each contribute to the Fe cation site. Residue 230–233 participates in substrate binding; it reads HHDE. Residue Tyr294 coordinates 2-oxoglutarate. His306 is a binding site for Fe cation. 2-oxoglutarate is bound by residues 315 to 317, Thr319, and Arg321; that span reads RFS.

It belongs to the fto family. Monomer. May also exist as homodimer. The cofactor is Fe(2+).

It is found in the nucleus. The protein localises to the nucleus speckle. Its subcellular location is the cytoplasm. It carries out the reaction a 5'-end (N(7)-methyl 5'-triphosphoguanosine)-(N(6),2'-O-dimethyladenosine) in mRNA + 2-oxoglutarate + O2 = a 5'-end (N(7)-methyl 5'-triphosphoguanosine)-(2'-O-methyladenosine) in mRNA + formaldehyde + succinate + CO2. It catalyses the reaction an N(6)-methyladenosine in mRNA + 2-oxoglutarate + O2 = an adenosine in mRNA + formaldehyde + succinate + CO2. The enzyme catalyses N(6)-methyladenosine in U6 snRNA + 2-oxoglutarate + O2 = adenosine in U6 snRNA + formaldehyde + succinate + CO2. The catalysed reaction is a 5'-end (N(7)-methyl 5'-triphosphoguanosine)-(N(6),2'-O-dimethyladenosine) in U6 snRNA + 2-oxoglutarate + O2 = a 5'-end (N(7)-methyl 5'-triphosphoguanosine)-(2'-O-methyladenosine) in U6 snRNA + formaldehyde + succinate + CO2. It carries out the reaction an N(1)-methyladenosine in tRNA + 2-oxoglutarate + O2 = an adenosine in tRNA + formaldehyde + succinate + CO2. RNA demethylase that mediates oxidative demethylation of different RNA species, such as mRNAs, tRNAs and snRNAs, and acts as a regulator of fat mass, adipogenesis and energy homeostasis. Specifically demethylates N(6)-methyladenosine (m6A) RNA, the most prevalent internal modification of messenger RNA (mRNA) in higher eukaryotes. M6A demethylation by FTO affects mRNA expression and stability. Also able to demethylate m6A in U6 small nuclear RNA (snRNA). Mediates demethylation of N(6),2'-O-dimethyladenosine cap (m6A(m)), by demethylating the N(6)-methyladenosine at the second transcribed position of mRNAs and U6 snRNA. Demethylation of m6A(m) in the 5'-cap by FTO affects mRNA stability by promoting susceptibility to decapping. Also acts as a tRNA demethylase by removing N(1)-methyladenine from various tRNAs. Has no activity towards 1-methylguanine. Has no detectable activity towards double-stranded DNA. Also able to repair alkylated DNA and RNA by oxidative demethylation: demethylates single-stranded RNA containing 3-methyluracil, single-stranded DNA containing 3-methylthymine and has low demethylase activity towards single-stranded DNA containing 1-methyladenine or 3-methylcytosine. Ability to repair alkylated DNA and RNA is however unsure in vivo. Involved in the regulation of fat mass, adipogenesis and body weight, thereby contributing to the regulation of body size and body fat accumulation. Involved in the regulation of thermogenesis and the control of adipocyte differentiation into brown or white fat cells. Regulates activity of the dopaminergic midbrain circuitry via its ability to demethylate m6A in mRNAs. Plays an oncogenic role in a number of acute myeloid leukemias by enhancing leukemic oncogene-mediated cell transformation: acts by mediating m6A demethylation of target transcripts such as MYC, CEBPA, ASB2 and RARA, leading to promote their expression. The sequence is that of Alpha-ketoglutarate-dependent dioxygenase FTO (FTO) from Canis lupus familiaris (Dog).